The sequence spans 151 residues: Type 4 adapter protein IcmW (151 aa).

In terms of assembly, the T4BSS is a complex nanomachine composed of several subcomplexes. This subunit is part of the Type IV Coupling Complex (T4CC), a subcomplex composed of the DotLMNYZ core and the IcmSW-LvgA adapter subunits, linked by the C-terminal tail of DotL. Interacts with IcmS. IcmS and IcmW form a stable complex. Interaction with IcmS greatly enhances the stability of IcmW. Interacts directly with the type 4 coupling protein DotL. Interacts with LvgA. Interacts with effector proteins.

The protein resides in the cytoplasm. Interaction with DotL is critical for the export of IcmSW-dependent substrates. In terms of biological role, component of the Dot/Icm type IVB secretion system (T4BSS), which is used to inject bacterial effector proteins into eukaryotic host cells. Part of a subcomplex which recruits effector proteins and delivers them to the core transmembrane subcomplex. The IcmS/IcmW protein complex plays an important role in protein translocation by interacting with multiple Dot/Icm effector proteins to facilitate their translocation into host cells. Interaction promotes conformational changes in the effector protein, which may facilitate display of a C-terminal translocation signal. May maintain the substrates in a translocation competent form. Required for intracellular growth in host cells, replicative phagosome formation and phagosome trafficking. The sequence is that of Type 4 adapter protein IcmW from Legionella pneumophila subsp. pneumophila (strain Philadelphia 1 / ATCC 33152 / DSM 7513).